The sequence spans 786 residues: Aculeacin-A acylase (786 aa).

The signal sequence occupies residues 1–22 (MTSSYMRLKAAAIAFGVIVATA). Positions 23–34 (AVPSPASGREHD) are excised as a propeptide. Residues 35–130 (GGYAALIRRA…PRDGVRAPCD (96 aa)) form a substrate-binding region. Positions 215–229 (AAIAAALDGTSAGIG) are cleaved as a propeptide — spacer peptide. Residues 220–239 (ALDGTSAGIGSNAYGLGAQA) form a possible recognition-sequence of an AAC processing enzyme region. The active-site Nucleophile is the serine 230. The interval 658-689 (ACNGSPASPSTRSVGDIHTDSRGERRIPIHGG) is disordered. The segment covering 672–684 (GDIHTDSRGERRI) has biased composition (basic and acidic residues).

This sequence belongs to the peptidase S45 family. As to quaternary structure, heterodimer of a small subunit and a large subunit processed from the same precursor.

It is found in the secreted. In terms of biological role, catalyzes the hydrolysis of the palmitoyl moiety of the antifungal antibiotic, aculeacin-A, giving a hexapeptide moiety and a long chain fatty acid. The protein is Aculeacin-A acylase (aac) of Actinoplanes utahensis.